The primary structure comprises 556 residues: Glutamine--tRNA ligase (556 aa).

The 'HIGH' region motif lies at 34–44 (PEPNGYLHIGH). ATP-binding positions include 35 to 37 (EPN) and 41 to 47 (HIGHAKS). Residues Asp67 and Tyr212 each coordinate L-glutamine. Residues Thr231, 261–262 (RL), and 269–271 (MSK) contribute to the ATP site. Positions 268 to 272 (VMSKR) match the 'KMSKS' region motif.

This sequence belongs to the class-I aminoacyl-tRNA synthetase family. As to quaternary structure, monomer.

It localises to the cytoplasm. The catalysed reaction is tRNA(Gln) + L-glutamine + ATP = L-glutaminyl-tRNA(Gln) + AMP + diphosphate. This chain is Glutamine--tRNA ligase, found in Vibrio vulnificus (strain YJ016).